The primary structure comprises 415 residues: Glutamyl-tRNA reductase (415 aa).

Residues 49 to 52 (TCNR), Ser104, 109 to 111 (EPQ), and Gln115 contribute to the substrate site. Cys50 serves as the catalytic Nucleophile. 184 to 189 (GAGEMI) contacts NADP(+).

It belongs to the glutamyl-tRNA reductase family. In terms of assembly, homodimer.

The catalysed reaction is (S)-4-amino-5-oxopentanoate + tRNA(Glu) + NADP(+) = L-glutamyl-tRNA(Glu) + NADPH + H(+). The protein operates within porphyrin-containing compound metabolism; protoporphyrin-IX biosynthesis; 5-aminolevulinate from L-glutamyl-tRNA(Glu): step 1/2. Functionally, catalyzes the NADPH-dependent reduction of glutamyl-tRNA(Glu) to glutamate 1-semialdehyde (GSA). The protein is Glutamyl-tRNA reductase of Neisseria meningitidis serogroup B (strain ATCC BAA-335 / MC58).